The chain runs to 144 residues: Phosphomevalonate dehydratase small subunit (144 aa).

The active-site Proton acceptor is S65.

Belongs to the AcnX type II small subunit family. As to quaternary structure, heterodimer composed of a large subunit (PMDh-L) and a small subunit (PMDh-S).

It catalyses the reaction (R)-5-phosphomevalonate = (2E)-3-methyl-5-phosphooxypent-2-enoate + H2O. It functions in the pathway isoprenoid biosynthesis; isopentenyl diphosphate biosynthesis via mevalonate pathway. Functionally, component of a hydro-lyase that catalyzes the dehydration of mevalonate 5-phosphate (MVA5P) to form trans-anhydromevalonate 5-phosphate (tAHMP). Involved in the archaeal mevalonate (MVA) pathway, which provides fundamental precursors for isoprenoid biosynthesis, such as isopentenyl diphosphate (IPP) and dimethylallyl diphosphate (DMAPP). The chain is Phosphomevalonate dehydratase small subunit from Methanosarcina mazei (strain ATCC BAA-159 / DSM 3647 / Goe1 / Go1 / JCM 11833 / OCM 88) (Methanosarcina frisia).